The primary structure comprises 669 residues: Collagen alpha-1(II) chain (669 aa).

A 4-hydroxyproline mark is found at Pro3 and Pro12. A compositionally biased stretch (low complexity) spans 318-327; the sequence is XXXXXXXGAP. Disordered stretches follow at residues 318-360, 405-438, and 638-669; these read XXXX…XXXX and XXGF…AGPR. Residues Pro336 and Pro345 each carry the 4-hydroxyproline modification. Composition is skewed to low complexity over residues 339–360 and 405–420; these read AGFA…XXXX and XXXX…NGNP. 3-hydroxyproline is present on Pro413. Residues Pro414, Pro420, and Pro426 each carry the 4-hydroxyproline modification. Low complexity-rich tracts occupy residues 429-438 and 638-647; these read AGKXXXXXXX and XXGFTGLQGL. Residue Pro648 is modified to 4-hydroxyproline. 3-hydroxyproline is present on Pro650.

This sequence belongs to the fibrillar collagen family. Homotrimers of alpha 1(II) chains. Post-translationally, contains mostly 4-hydroxyproline. Prolines at the third position of the tripeptide repeating unit (G-X-P) are 4-hydroxylated in some or all of the chains. Contains 3-hydroxyproline at a few sites. This modification occurs on the first proline residue in the sequence motif Gly-Pro-Hyp, where Hyp is 4-hydroxyproline.

The protein resides in the secreted. It is found in the extracellular space. It localises to the extracellular matrix. Its function is as follows. Type II collagen is specific for cartilaginous tissues. It is essential for the normal embryonic development of the skeleton, for linear growth and for the ability of cartilage to resist compressive forces. The protein is Collagen alpha-1(II) chain of Mammut americanum (American mastodon).